The primary structure comprises 162 residues: Protein-export protein SecB (162 aa).

The protein belongs to the SecB family. As to quaternary structure, homotetramer, a dimer of dimers. One homotetramer interacts with 1 SecA dimer.

The protein localises to the cytoplasm. Functionally, one of the proteins required for the normal export of preproteins out of the cell cytoplasm. It is a molecular chaperone that binds to a subset of precursor proteins, maintaining them in a translocation-competent state. It also specifically binds to its receptor SecA. This is Protein-export protein SecB from Legionella pneumophila (strain Paris).